A 522-amino-acid chain; its full sequence is Peptide methionine sulfoxide reductase MsrA/MsrB (522 aa).

The 158-residue stretch at 17 to 174 folds into the Thioredoxin domain; it reads LALGACSPKI…ALALIRDPNA (158 aa). An intrachain disulfide couples cysteine 68 to cysteine 71. Residues 199–354 form a peptide methionine sulfoxide reductase A region; that stretch reads RTIYLAGGCF…PNGYCHIDIR (156 aa). Cysteine 207 is a catalytic residue. The region spanning 383–506 is the MsrB domain; that stretch reads DAELKRTLTE…NGASLKFIPL (124 aa). An intrachain disulfide couples cysteine 440 to cysteine 495. Cysteine 495 (nucleophile) is an active-site residue.

This sequence in the N-terminal section; belongs to the thioredoxin family. In the central section; belongs to the MsrA Met sulfoxide reductase family. It in the C-terminal section; belongs to the MsrB Met sulfoxide reductase family.

The enzyme catalyses L-methionyl-[protein] + [thioredoxin]-disulfide + H2O = L-methionyl-(S)-S-oxide-[protein] + [thioredoxin]-dithiol. It catalyses the reaction [thioredoxin]-disulfide + L-methionine + H2O = L-methionine (S)-S-oxide + [thioredoxin]-dithiol. It carries out the reaction L-methionyl-[protein] + [thioredoxin]-disulfide + H2O = L-methionyl-(R)-S-oxide-[protein] + [thioredoxin]-dithiol. Its function is as follows. Has an important function as a repair enzyme for proteins that have been inactivated by oxidation. Catalyzes the reversible oxidation-reduction of methionine sulfoxide in proteins to methionine. The sequence is that of Peptide methionine sulfoxide reductase MsrA/MsrB (msrAB) from Neisseria meningitidis serogroup B (strain ATCC BAA-335 / MC58).